The sequence spans 249 residues: Acidic leucine-rich nuclear phosphoprotein 32 family member A (249 aa).

Thr-15 carries the phosphothreonine modification. Residue Ser-17 is modified to Phosphoserine. LRR repeat units follow at residues 18-38 (DVKE…EGLT), 43-64 (ELEF…PKLN), 65-87 (KLKK…AEKC), and 89-110 (NLTH…EPLK). In terms of domain architecture, LRRCT spans 123 to 161 (CEVTNLNDYRENVFKLLPQLTYLDGYDRDDKEAPDSDAE). Positions 147 to 156 (GYDRDDKEAP) are enriched in basic and acidic residues. Residues 147-249 (GYDRDDKEAP…EPEDEGEDDD (103 aa)) form a disordered region. The interval 150–174 (RDDKEAPDSDAEGYVEGLDDEEEDE) is necessary for tumor-suppressive function. Over residues 157 to 230 (DSDAEGYVEG…DEEDEEELGE (74 aa)) the composition is skewed to acidic residues. Residues Ser-158 and Ser-204 each carry the phosphoserine; by CK2 modification. The tract at residues 165–249 (EGLDDEEEDE…EPEDEGEDDD (85 aa)) is interaction with E4F1.

The protein belongs to the ANP32 family. Component of the SET complex, composed of at least ANP32A, APEX1, HMGB2, NME1, SET and TREX1. Directly interacts with SET. Interacts with ATXN1/SCA1. Interacts with MAP1B. Interacts with ELAVL1. Part of the INHAT (inhibitor of histone acetyltransferases) complex. Interacts with E4F1. In terms of assembly, (Microbial infection) Interacts (via C-terminus) with influenza virus A protein PB2; this interaction promotes viral replication. As to quaternary structure, (Microbial infection) Interacts (via C-terminus) with influenza virus B protein PB2; this interaction promotes viral replication. (Microbial infection) Interacts (via C-terminus) with influenza virus C protein PB2; this interaction promotes viral replication by bridging viral replicase dimers together. Post-translationally, phosphorylated on serine residues, at least in part by casein kinase 2/CK2. The N-terminus is blocked. In terms of processing, some glutamate residues are glycylated by TTLL8. This modification occurs exclusively on glutamate residues and results in a glycine chain on the gamma-carboxyl group. Expressed in all tissues tested. Highly expressed in kidney and skeletal muscle, moderate levels of expression in brain, placenta and pancreas, and weakly expressed in lung. Found in all regions of the brain examined (amygdala, caudate nucleus, corpus callosum, hippocampus and thalamus), with highest levels in amygdala.

Its subcellular location is the nucleus. It localises to the cytoplasm. It is found in the endoplasmic reticulum. Its function is as follows. Multifunctional protein that is involved in the regulation of many processes including tumor suppression, apoptosis, cell cycle progression or transcription. Promotes apoptosis by favouring the activation of caspase-9/CASP9 and allowing apoptosome formation. In addition, plays a role in the modulation of histone acetylation and transcription as part of the INHAT (inhibitor of histone acetyltransferases) complex. Inhibits the histone-acetyltranferase activity of EP300/CREBBP (CREB-binding protein) and EP300/CREBBP-associated factor by histone masking. Preferentially binds to unmodified histone H3 and sterically inhibiting its acetylation and phosphorylation leading to cell growth inhibition. Participates in other biochemical processes such as regulation of mRNA nuclear-to-cytoplasmic translocation and stability by its association with ELAVL1 (Hu-antigen R). Plays a role in E4F1-mediated transcriptional repression as well as inhibition of protein phosphatase 2A. (Microbial infection) Plays an essential role in influenza A, B and C viral genome replication. Mechanistically, mediates the assembly of the viral replicase asymmetric dimers composed of PB1, PB2 and PA via its N-terminal region. Also plays an essential role in foamy virus mRNA export from the nucleus. The protein is Acidic leucine-rich nuclear phosphoprotein 32 family member A (ANP32A) of Homo sapiens (Human).